Here is a 337-residue protein sequence, read N- to C-terminus: Fructose-1,6-bisphosphatase class 1 (337 aa).

Mg(2+)-binding residues include Glu-94, Asp-116, Leu-118, and Asp-119. Substrate-binding positions include 119–122 (DGSS), Asn-210, and Lys-276. A Mg(2+)-binding site is contributed by Glu-282.

It belongs to the FBPase class 1 family. As to quaternary structure, homotetramer. Requires Mg(2+) as cofactor.

Its subcellular location is the cytoplasm. It catalyses the reaction beta-D-fructose 1,6-bisphosphate + H2O = beta-D-fructose 6-phosphate + phosphate. The protein operates within carbohydrate biosynthesis; gluconeogenesis. The sequence is that of Fructose-1,6-bisphosphatase class 1 from Burkholderia lata (strain ATCC 17760 / DSM 23089 / LMG 22485 / NCIMB 9086 / R18194 / 383).